A 264-amino-acid polypeptide reads, in one-letter code: ATP synthase subunit a (264 aa).

Transmembrane regions (helical) follow at residues 39 to 59, 97 to 117, 139 to 159, 205 to 225, and 239 to 259; these read LDTL…FYIV, VAPL…MDLV, TADP…VIFY, LFGN…LPWW, and LLVI…YISL.

Belongs to the ATPase A chain family. F-type ATPases have 2 components, CF(1) - the catalytic core - and CF(0) - the membrane proton channel. CF(1) has five subunits: alpha(3), beta(3), gamma(1), delta(1), epsilon(1). CF(0) has three main subunits: a(1), b(2) and c(9-12). The alpha and beta chains form an alternating ring which encloses part of the gamma chain. CF(1) is attached to CF(0) by a central stalk formed by the gamma and epsilon chains, while a peripheral stalk is formed by the delta and b chains.

The protein resides in the cell inner membrane. Functionally, key component of the proton channel; it plays a direct role in the translocation of protons across the membrane. The chain is ATP synthase subunit a from Coxiella burnetii (strain Dugway 5J108-111).